The following is a 181-amino-acid chain: TATA-box-binding protein C (181 aa).

A run of 2 repeats spans residues 5-83 (IANI…LGML) and 99-177 (VENV…QSKV).

Belongs to the TBP family.

Its function is as follows. General factor that plays a role in the activation of archaeal genes transcribed by RNA polymerase. Binds specifically to the TATA box promoter element which lies close to the position of transcription initiation. In Halobacterium salinarum (strain ATCC 700922 / JCM 11081 / NRC-1) (Halobacterium halobium), this protein is TATA-box-binding protein C (tbpC1).